The following is a 372-amino-acid chain: E3 ubiquitin-protein ligase RNF34 (372 aa).

The segment at 56 to 107 adopts an FYVE-type zinc-finger fold; that stretch reads EGPNIVCKACGLSFSVFRKKHVCCDCKKDFCSVCSVLQENLRRCSTCHLLQE. The SAP 1 domain occupies 115-134; sequence LMRLKVKDLRQYLILRNIPI. At serine 169 the chain carries Phosphoserine. Residues 194–253 are disordered; the sequence is QGELMDGDQTSRSGVPAQVQSEITSANTEDDDDDDDEDDDDEEENAEDRNPGLSKERVRA. The span at 201-220 shows a compositional bias: polar residues; it reads DQTSRSGVPAQVQSEITSAN. Acidic residues predominate over residues 221–239; sequence TEDDDDDDDEDDDDEEENA. Basic and acidic residues predominate over residues 240-252; the sequence is EDRNPGLSKERVR. Serine 254 and serine 256 each carry phosphoserine. One can recognise an SAP 2 domain in the interval 264–278; that stretch reads VEGMSVRQLKEILAR. The RING-type zinc finger occupies 325-360; it reads CRICMDAVIDCVLLECGHMVTCTKCGKRMSECPICR.

As to quaternary structure, interacts with CASP8 and CASP10. Interacts (via RING-type zinc finger) with PPARGC1A. Interacts with NOD1. Interacts with p53/TP53; involved in p53/TP53 ubiquitination. Interacts (via RING-type zinc finger) with MDM2; the interaction stabilizes MDM2. Autoubiquitinated (in vitro). Post-translationally, proteolytically cleaved by caspases upon induction of apoptosis by TNF. Ubiquitous. Detected in heart, brain, liver, skeletal muscle, kidney, pancreas, spleen, thymus, prostate, testis, ovary, colon and leukocytes.

The protein resides in the cell membrane. It localises to the endomembrane system. It is found in the nucleus. The protein localises to the nucleus speckle. Its subcellular location is the cytoplasm. The protein resides in the cytosol. It catalyses the reaction S-ubiquitinyl-[E2 ubiquitin-conjugating enzyme]-L-cysteine + [acceptor protein]-L-lysine = [E2 ubiquitin-conjugating enzyme]-L-cysteine + N(6)-ubiquitinyl-[acceptor protein]-L-lysine.. It functions in the pathway protein modification; protein ubiquitination. E3 ubiquitin-protein ligase that regulates several biological processes through the ubiquitin-mediated proteasomal degradation of various target proteins. Ubiquitinates the caspases CASP8 and CASP10, promoting their proteasomal degradation, to negatively regulate cell death downstream of death domain receptors in the extrinsic pathway of apoptosis. May mediate 'Lys-48'-linked polyubiquitination of RIPK1 and its subsequent proteasomal degradation thereby indirectly regulating the tumor necrosis factor-mediated signaling pathway. Negatively regulates p53/TP53 through its direct ubiquitination and targeting to proteasomal degradation. Indirectly, may also negatively regulate p53/TP53 through ubiquitination and degradation of SFN. Mediates PPARGC1A proteasomal degradation probably through ubiquitination thereby indirectly regulating the metabolism of brown fat cells. Possibly involved in innate immunity, through 'Lys-48'-linked polyubiquitination of NOD1 and its subsequent proteasomal degradation. The chain is E3 ubiquitin-protein ligase RNF34 from Homo sapiens (Human).